Reading from the N-terminus, the 296-residue chain is Polyamine aminopropyltransferase (296 aa).

The region spanning 5 to 238 is the PABS domain; the sequence is ELWYETLHAN…GIMTFAWATQ (234 aa). Gln-33 serves as a coordination point for S-methyl-5'-thioadenosine. Spermidine-binding residues include His-64 and Asp-88. Residues Glu-108 and 140-141 contribute to the S-methyl-5'-thioadenosine site; that span reads DG. Asp-158 serves as the catalytic Proton acceptor. Spermidine is bound at residue 158–161; that stretch reads DCTD. Position 165 (Pro-165) interacts with S-methyl-5'-thioadenosine.

This sequence belongs to the spermidine/spermine synthase family. In terms of assembly, homodimer or homotetramer.

It is found in the cytoplasm. The catalysed reaction is S-adenosyl 3-(methylsulfanyl)propylamine + putrescine = S-methyl-5'-thioadenosine + spermidine + H(+). The protein operates within amine and polyamine biosynthesis; spermidine biosynthesis; spermidine from putrescine: step 1/1. Catalyzes the irreversible transfer of a propylamine group from the amino donor S-adenosylmethioninamine (decarboxy-AdoMet) to putrescine (1,4-diaminobutane) to yield spermidine. The protein is Polyamine aminopropyltransferase of Yersinia pseudotuberculosis serotype O:3 (strain YPIII).